The sequence spans 616 residues: Probable Xaa-Pro aminopeptidase P (616 aa).

Residues D413, D424, E522, and E536 each coordinate Mn(2+).

Belongs to the peptidase M24B family. It depends on Mn(2+) as a cofactor.

It catalyses the reaction Release of any N-terminal amino acid, including proline, that is linked to proline, even from a dipeptide or tripeptide.. Catalyzes the removal of a penultimate prolyl residue from the N-termini of peptides. This is Probable Xaa-Pro aminopeptidase P (AMPP) from Paracoccidioides lutzii (strain ATCC MYA-826 / Pb01) (Paracoccidioides brasiliensis).